Consider the following 661-residue polypeptide: Heme transporter BhuA (661 aa).

The signal sequence occupies residues 1-23 (MKFTRTLVLASTSLLATVATSQA). A TBDR plug domain is found at 48-159 (KDNIEATGGT…AAGAIRYETV (112 aa)). In terms of domain architecture, TBDR beta-barrel spans 170-661 (TFGARIIGSY…TFTFQTAFKF (492 aa)).

The protein belongs to the TonB-dependent receptor family.

The protein localises to the cell outer membrane. In terms of biological role, heme transporter. The sequence is that of Heme transporter BhuA (bhuA) from Brucella ovis (strain ATCC 25840 / 63/290 / NCTC 10512).